The primary structure comprises 285 residues: Pantothenate synthetase (285 aa).

Residue M30–H37 coordinates ATP. H37 acts as the Proton donor in catalysis. Residue Q61 participates in (R)-pantoate binding. Q61 is a binding site for beta-alanine. Residue G149–D152 coordinates ATP. Q155 is a (R)-pantoate binding site. ATP-binding positions include V178 and L186 to R189.

It belongs to the pantothenate synthetase family. In terms of assembly, homodimer.

It is found in the cytoplasm. It catalyses the reaction (R)-pantoate + beta-alanine + ATP = (R)-pantothenate + AMP + diphosphate + H(+). The protein operates within cofactor biosynthesis; (R)-pantothenate biosynthesis; (R)-pantothenate from (R)-pantoate and beta-alanine: step 1/1. Its function is as follows. Catalyzes the condensation of pantoate with beta-alanine in an ATP-dependent reaction via a pantoyl-adenylate intermediate. The polypeptide is Pantothenate synthetase (Halorhodospira halophila (strain DSM 244 / SL1) (Ectothiorhodospira halophila (strain DSM 244 / SL1))).